The chain runs to 76 residues: Exodeoxyribonuclease 7 small subunit (76 aa).

This sequence belongs to the XseB family. In terms of assembly, heterooligomer composed of large and small subunits.

It is found in the cytoplasm. The catalysed reaction is Exonucleolytic cleavage in either 5'- to 3'- or 3'- to 5'-direction to yield nucleoside 5'-phosphates.. Functionally, bidirectionally degrades single-stranded DNA into large acid-insoluble oligonucleotides, which are then degraded further into small acid-soluble oligonucleotides. This chain is Exodeoxyribonuclease 7 small subunit, found in Bacillus cereus (strain ATCC 14579 / DSM 31 / CCUG 7414 / JCM 2152 / NBRC 15305 / NCIMB 9373 / NCTC 2599 / NRRL B-3711).